The chain runs to 263 residues: Putative cysteine-rich repeat secretory protein 31 (263 aa).

A signal peptide spans 1–32; it reads MHNSYSLSKRLVLVLFLAVVATQLFLIRNVSS. Gnk2-homologous domains follow at residues 39–141 and 146–260; these read YLHH…AIEV and YDNN…FYPF.

The protein belongs to the cysteine-rich repeat secretory protein family.

The protein localises to the secreted. The protein is Putative cysteine-rich repeat secretory protein 31 (CRRSP31) of Arabidopsis thaliana (Mouse-ear cress).